The chain runs to 570 residues: Repressible high-affinity phosphate permease (570 aa).

Over 1-61 (MSTPQKTAGG…AVAGVGFFTD (61 aa)) the chain is Cytoplasmic. Residues 62–82 (SYDIFTVSLLTLMLGIVYFPG) traverse the membrane as a helical segment. At 83-95 (EGKMPTTSDTAIK) the chain is on the extracellular side. Residues 96-116 (LATSAGTVIGQVGFGAAADVF) form a helical membrane-spanning segment. Topologically, residues 117 to 120 (GRKS) are cytoplasmic. Residues 121–141 (MYGLELLFIIFATLAQALASG) form a helical membrane-spanning segment. The Extracellular segment spans residues 142–143 (SP). The chain crosses the membrane as a helical span at residues 144–164 (SINIIGIIIFWRVLMGVGIGG). The Cytoplasmic portion of the chain corresponds to 165–186 (DYPLSSIITSEFATTKWRGAMM). A helical transmembrane segment spans residues 187–207 (GAVFAMQGLGQLAAAFVMLFV). At 208–237 (TLGFKKSLEAAPTLASCTGDCAVAVDKMWR) the chain is on the extracellular side. A helical membrane pass occupies residues 238–258 (TVIGVGAVPGCIALYYRLTIP). The Cytoplasmic portion of the chain corresponds to 259-325 (ETPRYTFDVK…FFRHYSKRKN (67 aa)). A helical membrane pass occupies residues 326–346 (AMLLAGTALSWCFLDIAYYGV). The Extracellular segment spans residues 347–374 (SLNNATILNVIGYSTTGAKNTYEILYNT). A helical membrane pass occupies residues 375 to 395 (AVGNLIIVLAGAVPGYWVTVF). The Cytoplasmic segment spans residues 396–403 (TVDTVGRK). The chain crosses the membrane as a helical span at residues 404–424 (PIQFMGFGILTILFVVMGFAY). Over 425–433 (KHLSPHALL) the chain is Extracellular. The helical transmembrane segment at 434–454 (AIFVLAQFFFNFGPNATTFIV) threads the bilayer. At 455-468 (PGEVFPTRYRSTSH) the chain is on the cytoplasmic side. Residues 469–489 (GLSAAMGKIGSIIGQGAIAPL) form a helical membrane-spanning segment. The Extracellular segment spans residues 490-505 (RTRGAVKGGNPNPWMN). The helical transmembrane segment at 506–526 (HVLEIYALFMLLGVGTTFLIP) threads the bilayer. The Cytoplasmic portion of the chain corresponds to 527-570 (ETKRKTLEELSGEFDMSGEEEAQRDTTLTEHKTEAPTSSAAVNA). The segment covering 537 to 546 (SGEFDMSGEE) has biased composition (acidic residues). Residues 537-570 (SGEFDMSGEEEAQRDTTLTEHKTEAPTSSAAVNA) are disordered. Residues 547-560 (EAQRDTTLTEHKTE) show a composition bias toward basic and acidic residues. Over residues 561 to 570 (APTSSAAVNA) the composition is skewed to polar residues.

This sequence belongs to the major facilitator superfamily. Sugar transporter (TC 2.A.1.1) family.

The protein resides in the cell membrane. With respect to regulation, phosphate transport activity is competitively inhibited by arsenate. Functionally, high-affinity transporter for external inorganic phosphate. Acts probably as a H(+)-phosphate symporter. In Neurospora crassa (strain ATCC 24698 / 74-OR23-1A / CBS 708.71 / DSM 1257 / FGSC 987), this protein is Repressible high-affinity phosphate permease.